Consider the following 176-residue polypeptide: Mitochondrial inner membrane protein Mpv17 (176 aa).

4 helical membrane passes run Val-18–Val-38, Thr-53–Leu-73, Gly-94–Met-114, and Leu-131–Leu-151.

Belongs to the peroxisomal membrane protein PXMP2/4 family. High levels in heart, kidney, and brain, intermediate levels in testis, and low levels in liver and spleen.

The protein localises to the mitochondrion inner membrane. Its function is as follows. Non-selective channel that modulates the membrane potential under normal conditions and oxidative stress, and is involved in mitochondrial homeostasis. Involved in mitochondrial deoxynucleoside triphosphates (dNTP) pool homeostasis and mitochondrial DNA (mtDNA) maintenance. May be involved in the regulation of reactive oxygen species metabolism and the control of oxidative phosphorylation. This chain is Mitochondrial inner membrane protein Mpv17, found in Mus musculus (Mouse).